Reading from the N-terminus, the 1135-residue chain is MDPGSRWRNLPSGPSLKHLTDPSYGIPREQQKAALQELTRAHVESFNYAVHEGLGLAVQAIPPFEFAFKDERISFTILDAVISPPTVPKGTICKEANVYPAECRGRRSTYRGKLTADINWAVNGISKGIIKQFLGYVPIMVKSKLCNLRNLPPQALIEHHEEAEEMGGYFIINGIEKVIRMLIMPRRNFPIAMIRPKWKTRGPGYTQYGVSMHCVREEHSAVNMNLHYLENGTVMLNFIYRKELFFLPLGFALKALVSFSDYQIFQELIKGKEDDSFLRNSVSQMLRIVMEEGCSTQKQVLNYLGECFRVKLNVPDWYPNEQAAEFLFNQCICIHLKSNTEKFYMLCLMTRKLFALAKGECMEDNPDSLVNQEVLTPGQLFLMFLKEKLEGWLVSIKIAFDKKAQKTSVSMNTDNLMRIFTMGIDLTKPFEYLFATGNLRSKTGLGLLQDSGLCVVADKLNFIRYLSHFRCVHRGADFAKMRTTTVRRLLPESWGFLCPVHTPDGEPCGLMNHLTAVCEVVTQFVYTASIPALLCNLGVTPIDGAPHRSYSECYPVLLDGVMVGWVDKDLAPGIADSLRHFKVLREKRIPPWMEVVLIPMTGKPSLYPGLFLFTTPCRLVRPVQNLALGKEELIGTMEQIFMNVAIFEDEVFAGVTTHQELFPHSLLSVIANFIPFSDHNQSPRNMYQCQMGKQTMGFPLLTYQDRSDNKLYRLQTPQSPLVRPSMYDYYDMDNYPIGTNAIVAVISYTGYDMEDAMIVNKASWERGFAHGSVYKSEFIDLSEKIKQGDSSLVFGIKPGDPRVLQKLDDDGLPFIGAKLQYGDPYYSYLNLNTGESFVMYYKSKENCVVDNIKVCSNDTGSGKFKCVCITMRVPRNPTIGDKFASRHGQKGILSRLWPAEDMPFTESGMVPDILFNPHGFPSRMTIGMLIESMAGKSAALHGLCHDATPFIFSEENSALEYFGEMLKAAGYNFYGTERLYSGISGLELEADIFIGVVYYQRLRHMVSDKFQVRTTGARDRVTNQPIGGRNVQGGIRFGEMERDALLAHGTSFLLHDRLFNCSDRSVAHVCVKCGSLLSPLLEKPPPSWSAMRNRKYNCTLCSRSDTIDTVSVPYVFRYFVAELAAMNIKVKLDVV.

Residues 1–24 (MDPGSRWRNLPSGPSLKHLTDPSY) form a disordered region. Arg180 provides a ligand contact to RNA. Residues 194–208 (IRPKWKTRGPGYTQY) form a loop B region. Residues 236–247 (LNFIYRKELFFL) form a loop A region. Asp367 lines the RNA pocket. Fork loop stretches follow at residues 439–453 (LRSK…DSGL) and 474–489 (RGAD…VRRL). Asp755 contacts Mg(2+). Lys890 contacts RNA. Positions 1020 and 1036 each coordinate DNA. Position 1051 is a phosphoserine (Ser1051). Zn(2+)-binding residues include Cys1070, Cys1073, Cys1098, and Cys1101. The C4-type zinc-finger motif lies at 1070-1101 (CVKCGSLLSPLLEKPPPSWSAMRNRKYNCTLC).

The protein belongs to the RNA polymerase beta chain family. Component of the RNA polymerase I (Pol I) complex consisting of 13 subunits: a ten-subunit catalytic core composed of POLR1A/RPA1, POLR1B/RPA2, POLR1C/RPAC1, POLR1D/RPAC2, POLR1H/RPA12, POLR2E/RPABC1, POLR2F/RPABC2, POLR2H/RPABC3, POLR2K/RPABC4 and POLR2L/RPABC5; a mobile stalk subunit POLR1F/RPA43 protruding from the core and additional subunits homologous to general transcription factors POLR1E/RPA49 and POLR1G/RPA34. Part of Pol I pre-initiation complex (PIC), in which Pol I core assembles with RRN3 and promoter-bound UTBF and SL1/TIF-IB complex. Requires Mg(2+) as cofactor.

Its subcellular location is the nucleus. It is found in the nucleolus. The protein resides in the chromosome. It carries out the reaction RNA(n) + a ribonucleoside 5'-triphosphate = RNA(n+1) + diphosphate. Catalytic core component of RNA polymerase I (Pol I), a DNA-dependent RNA polymerase which synthesizes ribosomal RNA precursors using the four ribonucleoside triphosphates as substrates. Transcribes 47S pre-rRNAs from multicopy rRNA gene clusters, giving rise to 5.8S, 18S and 28S ribosomal RNAs. Pol I-mediated transcription cycle proceeds through transcription initiation, transcription elongation and transcription termination stages. During transcription initiation, Pol I pre-initiation complex (PIC) is recruited by the selectivity factor 1 (SL1/TIF-IB) complex bound to the core promoter that precedes an rDNA repeat unit. The PIC assembly bends the promoter favoring the formation of the transcription bubble and promoter escape. Once the polymerase has escaped from the promoter it enters the elongation phase during which RNA is actively polymerized, based on complementarity with the template DNA strand. Highly processive, assembles in structures referred to as 'Miller trees' where many elongating Pol I complexes queue and transcribe the same rDNA coding regions. At terminator sequences downstream of the rDNA gene, PTRF interacts with Pol I and halts Pol I transcription leading to the release of the RNA transcript and polymerase from the DNA. Forms Pol I active center together with the largest subunit POLR1A/RPA1. Appends one nucleotide at a time to the 3' end of the nascent RNA, with POLR1A/RPA1 contributing a Mg(2+)-coordinating DxDGD motif, and POLR1B/RPA2 participating in the coordination of a second Mg(2+) ion and providing lysine residues believed to facilitate Watson-Crick base pairing between the incoming nucleotide and the template base. Typically, Mg(2+) ions direct a 5' nucleoside triphosphate to form a phosphodiester bond with the 3' hydroxyl of the preceding nucleotide of the nascent RNA, with the elimination of pyrophosphate. Has proofreading activity: Pauses and backtracks to allow the cleavage of a missincorporated nucleotide via POLR1H/RPA12. High Pol I processivity is associated with decreased transcription fidelity. The polypeptide is DNA-directed RNA polymerase I subunit RPA2 (Homo sapiens (Human)).